The sequence spans 154 residues: Stigma-specific STIG1-like protein 3 (154 aa).

The first 23 residues, 1–23 (MGHRNTVLTILLTISIAIMVLIA), serve as a signal peptide directing secretion.

The protein belongs to the STIG1 family.

The sequence is that of Stigma-specific STIG1-like protein 3 from Arabidopsis thaliana (Mouse-ear cress).